Reading from the N-terminus, the 137-residue chain is Large ribosomal subunit protein uL16 (137 aa).

This sequence belongs to the universal ribosomal protein uL16 family. In terms of assembly, part of the 50S ribosomal subunit.

Binds 23S rRNA and is also seen to make contacts with the A and possibly P site tRNAs. This is Large ribosomal subunit protein uL16 from Cereibacter sphaeroides (strain ATCC 17029 / ATH 2.4.9) (Rhodobacter sphaeroides).